The chain runs to 197 residues: Class A basic helix-loop-helix protein 15 (197 aa).

Residues 1 to 12 (MKTKNRPPRRRT) show a composition bias toward basic residues. 2 disordered regions span residues 1-82 (MKTK…ERER) and 178-197 (QPQG…REGS). A phosphothreonine mark is found at T12 and T25. The span at 65-82 (GRRENSVQRRLESNERER) shows a compositional bias: basic and acidic residues. The region spanning 72-124 (QRRLESNERERQRMHKLNNAFQALREVIPHVRADKKLSKIETLTLAKNYIKSL) is the bHLH domain.

As to quaternary structure, forms homodimers or heterodimers with TCF3 gene products E12 and E47. These dimers bind to the E-box site, however, heterodimer with MYOD1 does not bind target DNA. In terms of tissue distribution, expressed in pancreatic tissue only in acinar cells. There is a complete absence of expression in intra- or interlobular pancreatic ducts and in all islet cells.

Its subcellular location is the nucleus. Plays a role in controlling the transcriptional activity of MyoD, ensuring that expanding myoblast populations remain undifferentiated. Repression may occur through muscle-specific E-box occupancy by homodimers. May also negatively regulate bHLH-mediated transcription through an N-terminal repressor domain. Serves as a key regulator of acinar cell function, stability, and identity. Also required for normal organelle localization in exocrine cells and for mitochondrial calcium ion transport. May function as a unique regulator of gene expression in several different embryonic and postnatal cell lineages. Binds to the E-box consensus sequence 5'-CANNTG-3'. The protein is Class A basic helix-loop-helix protein 15 (Bhlha15) of Mus musculus (Mouse).